The following is a 350-amino-acid chain: uncharacterized protein (350 aa).

Asp-214, Asp-225, His-289, Glu-318, and Glu-332 together coordinate Mn(2+).

This sequence belongs to the peptidase M24B family. Requires Mn(2+) as cofactor.

This is an uncharacterized protein from Staphylococcus saprophyticus subsp. saprophyticus (strain ATCC 15305 / DSM 20229 / NCIMB 8711 / NCTC 7292 / S-41).